We begin with the raw amino-acid sequence, 438 residues long: Ribosomal protein uS12 methylthiotransferase RimO (438 aa).

The 116-residue stretch at 1–116 (MNVGFISLGC…IWKEIENLLD (116 aa)) folds into the MTTase N-terminal domain. Cys-10, Cys-46, Cys-79, Cys-147, Cys-151, and Cys-154 together coordinate [4Fe-4S] cluster. Residues 133 to 363 (TTGSNMAYLK…MALQEKISRE (231 aa)) form the Radical SAM core domain. One can recognise a TRAM domain in the interval 366 to 435 (EQKVGNVYKV…DYDLFGELYT (70 aa)).

The protein belongs to the methylthiotransferase family. RimO subfamily. [4Fe-4S] cluster serves as cofactor.

It localises to the cytoplasm. The catalysed reaction is L-aspartate(89)-[ribosomal protein uS12]-hydrogen + (sulfur carrier)-SH + AH2 + 2 S-adenosyl-L-methionine = 3-methylsulfanyl-L-aspartate(89)-[ribosomal protein uS12]-hydrogen + (sulfur carrier)-H + 5'-deoxyadenosine + L-methionine + A + S-adenosyl-L-homocysteine + 2 H(+). Catalyzes the methylthiolation of an aspartic acid residue of ribosomal protein uS12. This is Ribosomal protein uS12 methylthiotransferase RimO from Alkaliphilus oremlandii (strain OhILAs) (Clostridium oremlandii (strain OhILAs)).